The sequence spans 123 residues: Antitoxin RnlB (123 aa).

As to quaternary structure, can form a complex with cognate toxin RnlA. In terms of processing, probably degraded by CplXP and Lon proteases.

In terms of biological role, antitoxin component of a type II toxin-antitoxin (TA) system. A labile antitoxin (half-life of 2.1 minutes) that inhibits the endonuclease activity of cognate toxin RnlA but not that of non-cognate toxin LsoA. This Escherichia coli (strain K12) protein is Antitoxin RnlB (rnlB).